Consider the following 205-residue polypeptide: Outer-membrane lipoprotein carrier protein (205 aa).

An N-terminal signal peptide occupies residues 1–22 (MKKTTLKFAALTLLGLSNLALA).

The protein belongs to the LolA family. In terms of assembly, monomer.

The protein resides in the periplasm. Participates in the translocation of lipoproteins from the inner membrane to the outer membrane. Only forms a complex with a lipoprotein if the residue after the N-terminal Cys is not an aspartate (The Asp acts as a targeting signal to indicate that the lipoprotein should stay in the inner membrane). This Haemophilus influenzae (strain PittEE) protein is Outer-membrane lipoprotein carrier protein.